The primary structure comprises 492 residues: Ketol-acid reductoisomerase (NADP(+)) (492 aa).

In terms of domain architecture, KARI N-terminal Rossmann spans 15–208 (AQLGKCRFMA…GGHRAGVLES (194 aa)). NADP(+)-binding positions include 45 to 48 (CGAQ), R68, R76, S78, and 108 to 110 (DKQ). H132 is a catalytic residue. An NADP(+)-binding site is contributed by G158. KARI C-terminal knotted domains follow at residues 209–344 (SFVA…NAPQ) and 345–485 (FEGK…MTDM). Residues D217, E221, E389, and E393 each contribute to the Mg(2+) site. S414 is a substrate binding site.

It belongs to the ketol-acid reductoisomerase family. Mg(2+) serves as cofactor.

The catalysed reaction is (2R)-2,3-dihydroxy-3-methylbutanoate + NADP(+) = (2S)-2-acetolactate + NADPH + H(+). It carries out the reaction (2R,3R)-2,3-dihydroxy-3-methylpentanoate + NADP(+) = (S)-2-ethyl-2-hydroxy-3-oxobutanoate + NADPH + H(+). Its pathway is amino-acid biosynthesis; L-isoleucine biosynthesis; L-isoleucine from 2-oxobutanoate: step 2/4. It functions in the pathway amino-acid biosynthesis; L-valine biosynthesis; L-valine from pyruvate: step 2/4. Functionally, involved in the biosynthesis of branched-chain amino acids (BCAA). Catalyzes an alkyl-migration followed by a ketol-acid reduction of (S)-2-acetolactate (S2AL) to yield (R)-2,3-dihydroxy-isovalerate. In the isomerase reaction, S2AL is rearranged via a Mg-dependent methyl migration to produce 3-hydroxy-3-methyl-2-ketobutyrate (HMKB). In the reductase reaction, this 2-ketoacid undergoes a metal-dependent reduction by NADPH to yield (R)-2,3-dihydroxy-isovalerate. This Yersinia pseudotuberculosis serotype O:3 (strain YPIII) protein is Ketol-acid reductoisomerase (NADP(+)).